Reading from the N-terminus, the 472-residue chain is Cysteine--tRNA ligase (472 aa).

Residue C27 coordinates Zn(2+). Residues 29–39 (PTVYNLIHIGN) carry the 'HIGH' region motif. Residues C214, H239, and E243 each contribute to the Zn(2+) site. A 'KMSKS' region motif is present at residues 271-275 (KMSKS). K274 contributes to the ATP binding site.

The protein belongs to the class-I aminoacyl-tRNA synthetase family. In terms of assembly, monomer. Zn(2+) serves as cofactor.

The protein resides in the cytoplasm. The catalysed reaction is tRNA(Cys) + L-cysteine + ATP = L-cysteinyl-tRNA(Cys) + AMP + diphosphate. This is Cysteine--tRNA ligase from Lachnospira eligens (strain ATCC 27750 / DSM 3376 / VPI C15-48 / C15-B4) (Eubacterium eligens).